Here is a 245-residue protein sequence, read N- to C-terminus: 4-hydroxy-tetrahydrodipicolinate reductase (245 aa).

NAD(+)-binding positions include 7–12 (GAKGKV), 75–77 (GTT), and 102–105 (APNF). Residue His132 is the Proton donor/acceptor of the active site. Residue His133 participates in (S)-2,3,4,5-tetrahydrodipicolinate binding. The Proton donor role is filled by Lys136. (S)-2,3,4,5-tetrahydrodipicolinate is bound at residue 142–143 (GT).

The protein belongs to the DapB family.

The protein localises to the cytoplasm. It catalyses the reaction (S)-2,3,4,5-tetrahydrodipicolinate + NAD(+) + H2O = (2S,4S)-4-hydroxy-2,3,4,5-tetrahydrodipicolinate + NADH + H(+). The enzyme catalyses (S)-2,3,4,5-tetrahydrodipicolinate + NADP(+) + H2O = (2S,4S)-4-hydroxy-2,3,4,5-tetrahydrodipicolinate + NADPH + H(+). Its pathway is amino-acid biosynthesis; L-lysine biosynthesis via DAP pathway; (S)-tetrahydrodipicolinate from L-aspartate: step 4/4. Its function is as follows. Catalyzes the conversion of 4-hydroxy-tetrahydrodipicolinate (HTPA) to tetrahydrodipicolinate. This Mycolicibacterium gilvum (strain PYR-GCK) (Mycobacterium gilvum (strain PYR-GCK)) protein is 4-hydroxy-tetrahydrodipicolinate reductase.